The sequence spans 313 residues: Ribosomal RNA small subunit methyltransferase H (313 aa).

S-adenosyl-L-methionine contacts are provided by residues 35 to 37 (GGH), D55, F80, D102, and Q109.

It belongs to the methyltransferase superfamily. RsmH family.

Its subcellular location is the cytoplasm. The catalysed reaction is cytidine(1402) in 16S rRNA + S-adenosyl-L-methionine = N(4)-methylcytidine(1402) in 16S rRNA + S-adenosyl-L-homocysteine + H(+). In terms of biological role, specifically methylates the N4 position of cytidine in position 1402 (C1402) of 16S rRNA. The chain is Ribosomal RNA small subunit methyltransferase H from Shewanella loihica (strain ATCC BAA-1088 / PV-4).